Here is a 215-residue protein sequence, read N- to C-terminus: MEIKGESMQKSKFRRICVFCGSSQGKKSSYQDAAVDLGNELVSRNIDLVYGGGSIGLMGLVSQAVHDGGRHVIGIIPKTLMPRELTGETVGEVRAVADMHQRKAEMAKHSDAFIALPGGYGTLEELLEVITWAQLGIHDKPVGLLNVDGYYNSLLSFIDKAVEEGFISPTAREIIVSAPTAKELVKKLEEYAPCHERVATKLCWEMERIGYSSEE.

Substrate is bound by residues Glu-84, Arg-102–Lys-103, Gly-119–Glu-125, and Thr-131.

Belongs to the LOG family. In terms of tissue distribution, expressed in roots and shoots. Detected in root procambium, lateral root primordia, vascular tissues of immature leaves, axillary buds, style and ovular funiculus.

The protein localises to the cytoplasm. It localises to the nucleus. It catalyses the reaction N(6)-(dimethylallyl)adenosine 5'-phosphate + H2O = N(6)-dimethylallyladenine + D-ribose 5-phosphate. The catalysed reaction is 9-ribosyl-trans-zeatin 5'-phosphate + H2O = trans-zeatin + D-ribose 5-phosphate. Cytokinin-activating enzyme working in the direct activation pathway. Phosphoribohydrolase that converts inactive cytokinin nucleotides to the biologically active free-base forms. The sequence is that of Cytokinin riboside 5'-monophosphate phosphoribohydrolase LOG3 (LOG3) from Arabidopsis thaliana (Mouse-ear cress).